Consider the following 1189-residue polypeptide: Disabled homolog 2-interacting protein (1189 aa).

Positions 1-75 (MSAGGSARKS…EPSAATPFRV (75 aa)) are disordered. The segment covering 20-38 (LLRRPRLQRQRSRSRSRTR) has biased composition (basic residues). The span at 39–49 (PARESPQERPG) shows a compositional bias: basic and acidic residues. The PH domain occupies 101–202 (SFRHILPGFR…WMENLRRAVH (102 aa)). The 119-residue stretch at 193–311 (WMENLRRAVH…AGRQFVEKWY (119 aa)) folds into the C2 domain. Residues 387–595 (GKVKDFLTDL…TNMQRFLLEI (209 aa)) form the Ras-GAP domain. Positions 646–943 (LRDVHTALST…RTPPNLLSTL (298 aa)) are necessary for interaction with AKT1. Residues 653–668 (LSTPGSGQLPGTNDLA) show a composition bias toward polar residues. 2 disordered regions span residues 653–678 (LSTPGSGQLPGTNDLASTPGSGSSSI) and 715–742 (RSSGVQPSPARSSSYSEANEPDLQMANG). Low complexity predominate over residues 669 to 678 (STPGSGSSSI). Over residues 715-731 (RSSGVQPSPARSSSYSE) the composition is skewed to polar residues. At Ser728 the chain carries Phosphoserine; by MAP3K5 and RIPK1. Ser747 is subject to Phosphoserine. Disordered regions lie at residues 803–823 (AGQTPTTPGTSEGAPGRPQLL), 843–865 (PRGLGDSGSEGHSSLSSHSNSEE), 895–998 (SLTE…SPNA), 1015–1035 (EDEGLGPDPPHRDRLRSKDEL), and 1164–1189 (RNGISPTNPTKLQITENGEFRNSSNC). The segment covering 852-865 (EGHSSLSSHSNSEE) has biased composition (low complexity). The span at 919-931 (QPPPPPPPPPPAP) shows a compositional bias: pro residues. 2 stretches are compositionally biased toward polar residues: residues 938-955 (NLLSTLQYPRPSSGTLAS) and 966-976 (RLRQQSSSSKG). Ser978 and Ser995 each carry phosphoserine. Positions 1023–1035 (PPHRDRLRSKDEL) are enriched in basic and acidic residues. Positions 1026 to 1159 (RDRLRSKDEL…SALTQLKERY (134 aa)) form a coiled coil.

On plasma membrane, exists in an inactive form complexed with TNFR1; in response to TNF-alpha, dissociates from TNFR1 complex, translocates to cytoplasm and forms part of an intracellular signaling complex comprising TRADD, RIPK1, TRAF2 and MAP3K5. Interacts with DAB1. Interacts (via NPXY motif) with DAB2 (via PID domain). Interacts (via PH domain) with ERN1. Part of a cytoplasmic complex made of HIPK1, DAB2IP and MAP3K5 in response to TNF-alpha; this complex formation promotes MAP3K5-JNK activation and subsequent apoptosis. Interacts (via N-terminal domain) with JAK2; the interaction occurs in a IFNG/IFN-gamma-dependent manner and inhibits JAK2 autophosphorylation activity. Interacts (via C2 domain) with GSK3B; the interaction stimulates GSK3B kinase activation. Interacts (via C2 domain) with PPP2CA. Interacts (via proline-rich motif) with a regulatory p85 subunit (via SH3 domain) of the PI3K complex; the interaction inhibits the PI3K-AKT complex activity in a TNF-alpha-dependent manner in prostate cancer (PCa) cells. Interacts with AKT1; the interaction is increased in a TNF-alpha-induced manner. Interacts (via C2 domain and active form preferentially) with KDR/VEGFR2 (tyrosine-phosphorylated active form preferentially); the interaction occurs at the late phase of VEGFA response and inhibits KDR/VEGFR2 activity. Interacts (via N-terminus C2 domain) with MAP3K5 ('Ser-966' dephosphorylated form preferentially); the interaction occurs in a TNF-alpha-induced manner. Interacts (via Ras-GAP domain) with the catalytic subunit of protein phosphatase PP2A; the interaction occurs in resting endothelial cells, is further enhanced by TNF-alpha stimulation and is required to bridge PP2A to MAP3K5. Interacts (via C-terminus PER domain) with TRAF2 (via zinc fingers); the interaction occurs in a TNF-alpha-dependent manner. Interacts with 14-3-3 proteins; the interaction occurs in a TNF-alpha-dependent manner. Interacts (via Ras-GAP domain) with RIPK1 (via kinase domain); the interaction occurs in a TNF-alpha-dependent manner. Interacts with RAB40C; acts as a GAP for RAB40C. In terms of processing, in response to TNF-alpha-induction, phosphorylated at Ser-728; phosphorylation leads to a conformational change, and thus, increases its association with 14-3-3 proteins, MAP3K5, RIPK1 and TRAF2 in endothelial cells; also stimulates regulatory p85 subunit sequestring and PI3K-p85 complex activity inhibition. As to expression, expressed in endothelial and vascular smooth muscle cells (VSMCs). Expressed in prostate epithelial but poorly in prostate cancer cells. Poorly expressed in medulloblastoma cells compared to cerebellar precursor proliferating progenitor cells (at protein level). Low expression in prostate. Down-regulated in prostate cancer.

It localises to the cytoplasm. Its subcellular location is the cell membrane. The protein localises to the membrane. The protein resides in the cell projection. It is found in the dendrite. Functions as a scaffold protein implicated in the regulation of a large spectrum of both general and specialized signaling pathways. Involved in several processes such as innate immune response, inflammation and cell growth inhibition, apoptosis, cell survival, angiogenesis, cell migration and maturation. Also plays a role in cell cycle checkpoint control; reduces G1 phase cyclin levels resulting in G0/G1 cell cycle arrest. Mediates signal transduction by receptor-mediated inflammatory signals, such as the tumor necrosis factor (TNF), interferon (IFN) or lipopolysaccharide (LPS). Modulates the balance between phosphatidylinositol 3-kinase (PI3K)-AKT-mediated cell survival and apoptosis stimulated kinase (MAP3K5)-JNK signaling pathways; sequesters both AKT1 and MAP3K5 and counterbalances the activity of each kinase by modulating their phosphorylation status in response to pro-inflammatory stimuli. Acts as a regulator of the endoplasmic reticulum (ER) unfolded protein response (UPR) pathway; specifically involved in transduction of the ER stress-response to the JNK cascade through ERN1. Mediates TNF-alpha-induced apoptosis activation by facilitating dissociation of inhibitor 14-3-3 from MAP3K5; recruits the PP2A phosphatase complex which dephosphorylates MAP3K5 on 'Ser-966', leading to the dissociation of 13-3-3 proteins and activation of the MAP3K5-JNK signaling pathway in endothelial cells. Also mediates TNF/TRAF2-induced MAP3K5-JNK activation, while it inhibits CHUK-NF-kappa-B signaling. Acts a negative regulator in the IFN-gamma-mediated JAK-STAT signaling cascade by inhibiting smooth muscle cell (VSMCs) proliferation and intimal expansion, and thus, prevents graft arteriosclerosis (GA). Acts as a GTPase-activating protein (GAP) for the ADP ribosylation factor 6 (ARF6), Ras and RAB40C. Promotes hydrolysis of the ARF6-bound GTP and thus, negatively regulates phosphatidylinositol 4,5-bisphosphate (PIP2)-dependent TLR4-TIRAP-MyD88 and NF-kappa-B signaling pathways in endothelial cells in response to lipopolysaccharides (LPS). Binds specifically to phosphatidylinositol 4-phosphate (PtdIns4P) and phosphatidylinositol 3-phosphate (PtdIns3P). In response to vascular endothelial growth factor (VEGFA), acts as a negative regulator of the VEGFR2-PI3K-mediated angiogenic signaling pathway by inhibiting endothelial cell migration and tube formation. In the developing brain, promotes both the transition from the multipolar to the bipolar stage and the radial migration of cortical neurons from the ventricular zone toward the superficial layer of the neocortex in a glial-dependent locomotion process. Probable downstream effector of the Reelin signaling pathway; promotes Purkinje cell (PC) dendrites development and formation of cerebellar synapses. Also functions as a tumor suppressor protein in prostate cancer progression; prevents cell proliferation and epithelial-to-mesenchymal transition (EMT) through activation of the glycogen synthase kinase-3 beta (GSK3B)-induced beta-catenin and inhibition of PI3K-AKT and Ras-MAPK survival downstream signaling cascades, respectively. This chain is Disabled homolog 2-interacting protein, found in Homo sapiens (Human).